A 687-amino-acid chain; its full sequence is Translation initiation factor IF-2 (687 aa).

In terms of domain architecture, tr-type G spans 186–355 (KRPPIVTVMG…LLTAEMLELK (170 aa)). The tract at residues 195-202 (GHVDHGKT) is G1. Residue 195–202 (GHVDHGKT) coordinates GTP. The tract at residues 220 to 224 (GITQH) is G2. Residues 241 to 244 (DTPG) are G3. Residues 241–245 (DTPGH) and 295–298 (NKID) each bind GTP. The tract at residues 295–298 (NKID) is G4. The interval 331–333 (SAK) is G5.

The protein belongs to the TRAFAC class translation factor GTPase superfamily. Classic translation factor GTPase family. IF-2 subfamily.

The protein resides in the cytoplasm. Functionally, one of the essential components for the initiation of protein synthesis. Protects formylmethionyl-tRNA from spontaneous hydrolysis and promotes its binding to the 30S ribosomal subunits. Also involved in the hydrolysis of GTP during the formation of the 70S ribosomal complex. The sequence is that of Translation initiation factor IF-2 from Clostridium botulinum (strain Eklund 17B / Type B).